An 855-amino-acid chain; its full sequence is DNA mismatch repair protein MutS (855 aa).

616 to 623 (GPNMGGKS) is an ATP binding site.

It belongs to the DNA mismatch repair MutS family.

Functionally, this protein is involved in the repair of mismatches in DNA. It is possible that it carries out the mismatch recognition step. This protein has a weak ATPase activity. In Salmonella newport (strain SL254), this protein is DNA mismatch repair protein MutS.